The chain runs to 404 residues: L-cysteine:1D-myo-inositol 2-amino-2-deoxy-alpha-D-glucopyranoside ligase (404 aa).

The interval 1-20 (MRTWPTPDVPPLPRTGAPAP) is disordered. Cys-45 lines the Zn(2+) pocket. Residues 45–48 (CGIT), Thr-60, and 83–85 (NVT) each bind L-cysteinyl-5'-AMP. The 'HIGH' region motif lies at 47 to 57 (ITPYDATHLGH). Positions 185–190 (ERGGDP) match the 'ERGGDP' region motif. Positions 185–216 (ERGGDPDRPGKKHPLDPALWRGEQPGEPSWDG) are disordered. Basic and acidic residues predominate over residues 186–199 (RGGDPDRPGKKHPL). Trp-226 contacts L-cysteinyl-5'-AMP. Cys-230 contributes to the Zn(2+) binding site. Residue 248 to 250 (GAD) participates in L-cysteinyl-5'-AMP binding. His-255 is a Zn(2+) binding site. Leu-280 provides a ligand contact to L-cysteinyl-5'-AMP. The 'KMSKS' region motif lies at 286-290 (KMSKS).

The protein belongs to the class-I aminoacyl-tRNA synthetase family. MshC subfamily. In terms of assembly, monomer. The cofactor is Zn(2+).

It catalyses the reaction 1D-myo-inositol 2-amino-2-deoxy-alpha-D-glucopyranoside + L-cysteine + ATP = 1D-myo-inositol 2-(L-cysteinylamino)-2-deoxy-alpha-D-glucopyranoside + AMP + diphosphate + H(+). Its function is as follows. Catalyzes the ATP-dependent condensation of GlcN-Ins and L-cysteine to form L-Cys-GlcN-Ins. The polypeptide is L-cysteine:1D-myo-inositol 2-amino-2-deoxy-alpha-D-glucopyranoside ligase (Xylanimonas cellulosilytica (strain DSM 15894 / JCM 12276 / CECT 5975 / KCTC 9989 / LMG 20990 / NBRC 107835 / XIL07)).